A 1148-amino-acid polypeptide reads, in one-letter code: Pyruvate carboxylase (1148 aa).

A Biotin carboxylation domain is found at 1 to 457 (MSQQSIQKVL…DTSFIDTTPE (457 aa)). Residues K121, E205, and H240 each coordinate ATP. In terms of domain architecture, ATP-grasp spans 125–321 (REQAEKAGIP…IVQTQILVAQ (197 aa)). Residue K242 is part of the active site. Residues 534-802 (VLLTDTTFRD…RPEMNVQGVE (269 aa)) form the Pyruvate carboxyltransferase domain. Substrate is bound by residues 542 to 546 (RDAHQ) and R615. Position 543 (D543) interacts with a divalent metal cation. 3 residues coordinate a divalent metal cation: K712, H741, and H743. K712 is subject to N6-carboxylysine. T876 serves as a coordination point for substrate. The 76-residue stretch at 1071–1146 (KADRTNPSHI…QTGDLLLEIE (76 aa)) folds into the Biotinyl-binding domain. The residue at position 1112 (K1112) is an N6-biotinyllysine.

As to quaternary structure, homotetramer. At very low potassium concentrations, when intracellular levels of c-di-AMP are low, interacts with apo-DarB. c-di-AMP inhibits the binding of DarB to PYC. Does not bind directly c-di-AMP. Biotin serves as cofactor.

It carries out the reaction hydrogencarbonate + pyruvate + ATP = oxaloacetate + ADP + phosphate + H(+). Activated by the cyclic di-AMP (c-di-AMP) receptor DarB in the absence of c-di-AMP. Allosterically activated by acetyl-CoA. Inhibited by the biotin-complexing protein avidin. Catalyzes a 2-step reaction, involving the ATP-dependent carboxylation of the covalently attached biotin in the first step and the transfer of the carboxyl group to pyruvate in the second, leading to oxaloacetate production. Fulfills an anaplerotic function in B.subtilis as it is necessary for growth on glucose, but is not required for sporulation. This is Pyruvate carboxylase (pyc) from Bacillus subtilis (strain 168).